The following is a 488-amino-acid chain: Stress activated transcription factor atfs-1 (488 aa).

A mitochondrion-targeting transit peptide spans 1–23 (MFSRVGRLTTFGAQAVSNCPFRR). Residues 138–191 (SWQNGSSVGHPHGHQQQQQTCQQPPTHSSTTETMHDFSNFGDNMGSPLFQSPSK) form a disordered region. Residues 142-168 (GSSVGHPHGHQQQQQTCQQPPTHSSTT) show a composition bias toward low complexity. A Glycyl lysine isopeptide (Lys-Gly) (interchain with G-Cter in smo-1) cross-link involves residue lysine 342. Residues 353-400 (QRDDDDEDYIPASEARRTSSRLNRKSATPTYLRRRDSERSWTPASDDY) are disordered. The region spanning 420-483 (DEETDRRRML…NSMKKELRKM (64 aa)) is the bZIP domain. The tract at residues 425 to 460 (RRRMLNRIAAVRYREKKRAEKKGRKMEFQEVADRNR) is basic motif. The Nuclear localization signal signature appears at 436 to 441 (RYREKK). Positions 462–469 (LLQKERQL) are leucine-zipper.

Belongs to the bZIP family. Post-translationally, may be desumoylated by ulp-4. Ubiquitously expressed.

Its subcellular location is the mitochondrion matrix. The protein localises to the cytoplasm. It localises to the nucleus. Acts as a transcription factor during mitochondrial stress by activating the mitochondrial unfolded protein response (mtUPR). Induces nuclear and mitochondrial gene transcription, including genes coding for mitochondrial chaperones and proteins involved in glycolysis, amino acid catabolism and innate immunity. Following mitochondrial stress, restores mitochondrial respiratory capacity by limiting the transcription of oxidative phosphorylation (OXPHOS) machinery genes and by promoting the assembly of OXPHOS complexes via the up-regulation of chaperone and assembly factor genes. Component of a feedback loop involving atfs-1, atgl-1 and hlh-11. Acts together with flp-7 to negatively regulate the expression of the transcription regulator hlh-11, to promote expression of atgl-1, and thus atgl-1-dependent fat oxidation in response to mitochondrial stress. In addition, functions with hlh-11 to maintain lifespan. Promotes mtDNA maintenance and propagation of deleterious mtDNA. This chain is Stress activated transcription factor atfs-1, found in Caenorhabditis elegans.